Consider the following 100-residue polypeptide: Urease subunit gamma (100 aa).

Belongs to the urease gamma subunit family. As to quaternary structure, heterotrimer of UreA (gamma), UreB (beta) and UreC (alpha) subunits. Three heterotrimers associate to form the active enzyme. In terms of processing, although not discussed in the published references, Met-1 is represented in the submitted PDB entries as being modified by either a formyl, a carboxyl, or an acetyl group. The N-terminal is probably N-(dihydroxymethyl)methionine, the hydrated form of N-formylmethionine.

It is found in the cytoplasm. The catalysed reaction is urea + 2 H2O + H(+) = hydrogencarbonate + 2 NH4(+). The protein operates within nitrogen metabolism; urea degradation; CO(2) and NH(3) from urea (urease route): step 1/1. In Sporosarcina pasteurii (Bacillus pasteurii), this protein is Urease subunit gamma.